A 188-amino-acid polypeptide reads, in one-letter code: MNKTASCELLLFVSGEAGLTLAELSALTEMSKQACQQQIDYLKEKYHSDEESALTIIETAGKYRMATKEEFAEILKNYAKTPLNQSLSKSALEVLSIIAYKQPLTRLEIDHLRGVNSSGVLSTLRAFDLVEKVGQVEAPGRPSLYATTDFFLDYIGINHLDELPEIDESRFIAEEQTLFNESEENENQ.

Belongs to the ScpB family. Homodimer. Homodimerization may be required to stabilize the binding of ScpA to the Smc head domains. Component of a cohesin-like complex composed of ScpA, ScpB and the Smc homodimer, in which ScpA and ScpB bind to the head domain of Smc. The presence of the three proteins is required for the association of the complex with DNA.

The protein localises to the cytoplasm. Participates in chromosomal partition during cell division. May act via the formation of a condensin-like complex containing Smc and ScpA that pull DNA away from mid-cell into both cell halves. In Lactococcus lactis subsp. lactis (strain IL1403) (Streptococcus lactis), this protein is Segregation and condensation protein B.